The following is a 710-amino-acid chain: DNA ligase (710 aa).

Residues 53–57 (DAEYD), 102–103 (SL), and E136 each bind NAD(+). K138 acts as the N6-AMP-lysine intermediate in catalysis. Residues R159, E196, K312, and K336 each contribute to the NAD(+) site. Zn(2+) contacts are provided by C429, C432, C453, and C459. The BRCT domain occupies 633-710 (ETSSPVAGKT…DEDQWIELAG (78 aa)).

The protein belongs to the NAD-dependent DNA ligase family. LigA subfamily. The cofactor is Mg(2+). Mn(2+) serves as cofactor.

The catalysed reaction is NAD(+) + (deoxyribonucleotide)n-3'-hydroxyl + 5'-phospho-(deoxyribonucleotide)m = (deoxyribonucleotide)n+m + AMP + beta-nicotinamide D-nucleotide.. Its function is as follows. DNA ligase that catalyzes the formation of phosphodiester linkages between 5'-phosphoryl and 3'-hydroxyl groups in double-stranded DNA using NAD as a coenzyme and as the energy source for the reaction. It is essential for DNA replication and repair of damaged DNA. This is DNA ligase from Parvibaculum lavamentivorans (strain DS-1 / DSM 13023 / NCIMB 13966).